The sequence spans 833 residues: 3-hydroxy-3-methylglutaryl-coenzyme A reductase (833 aa).

4 helical membrane passes run 10-32, 91-117, 160-180, and 301-321; these read FCAR…AASV, YLLI…LFWS, LALL…LVGV, and SADY…FVFF. Residues 322-419 form a linker region; it reads EEQRNWVIDM…EEVVMLVEQS (98 aa). Residues 347-374 form a disordered region; sequence KPKFSVGDDSNSEVSTQTEGVLEDEWPT. The span at 354 to 365 shows a compositional bias: polar residues; sequence DDSNSEVSTQTE. Positions 420-833 are catalytic; the sequence is HIPLHRLEAV…ENITLKVPTL (414 aa). Catalysis depends on charge relay system residues Glu504 and Lys635. The N-linked (GlcNAc...) asparagine glycan is linked to Asn680. Asp711 (charge relay system) is an active-site residue. N-linked (GlcNAc...) asparagine glycosylation is found at Asn715 and Asn720. The active-site Proton donor is His809. N-linked (GlcNAc...) asparagine glycosylation is found at Asn813 and Asn825.

It belongs to the HMG-CoA reductase family.

It is found in the endoplasmic reticulum membrane. The enzyme catalyses (R)-mevalonate + 2 NADP(+) + CoA = (3S)-3-hydroxy-3-methylglutaryl-CoA + 2 NADPH + 2 H(+). The protein operates within metabolic intermediate biosynthesis; (R)-mevalonate biosynthesis; (R)-mevalonate from acetyl-CoA: step 3/3. The activity of HMG-CoA-reductase is suppressed by exogenous mevalonate. Synthesis of mevalonate for the production of non-sterol isoprenoids, which are essential for growth differentiation. This is 3-hydroxy-3-methylglutaryl-coenzyme A reductase (HMGR) from Agrotis ipsilon (Black cutworm moth).